We begin with the raw amino-acid sequence, 793 residues long: Meiosis-specific protein ASY3 (793 aa).

4 disordered regions span residues M1–D40, L58–G97, L110–A287, and E305–S586. Residues F7–K19 show a composition bias toward polar residues. Positions A60–A70 are enriched in basic and acidic residues. Residues Q72–W86 are compositionally biased toward polar residues. Positions L110–G122 are enriched in low complexity. Residues S131–H142 show a composition bias toward polar residues. Composition is skewed to basic and acidic residues over residues R151–E165 and S177–K187. The span at P209–T219 shows a compositional bias: polar residues. Basic and acidic residues predominate over residues E221 to D248. Over residues K322–R341 the composition is skewed to basic residues. Basic and acidic residues-rich tracts occupy residues K342 to S354, E363 to P385, Q392 to P407, and N424 to E441. 2 stretches are compositionally biased toward low complexity: residues A455–P470 and G491–Q502. Basic and acidic residues-rich tracts occupy residues D505–S527 and S541–S553. Residues S682 to S745 adopt a coiled-coil conformation.

As to quaternary structure, interacts with ASY1.

It localises to the chromosome. The protein resides in the nucleus. Its function is as follows. Required for normal meiosis in male and female gametophytes. Acts with ASY1 at the interface between the developing chromosome axes and the recombination machinery to ensure interhomolog recombination. Required for synaptonemal complex formation during meiosis. The protein is Meiosis-specific protein ASY3 of Arabidopsis thaliana (Mouse-ear cress).